Reading from the N-terminus, the 350-residue chain is Probable V-type proton ATPase subunit d 2 (350 aa).

Belongs to the V-ATPase V0D/AC39 subunit family. V-ATPase is a heteromultimeric enzyme made up of two complexes: the ATP-hydrolytic V1 complex and the proton translocation V0 complex. The V1 complex consists of three catalytic AB heterodimers that form a heterohexamer, three peripheral stalks each consisting of EG heterodimers, one central rotor including subunits D and F, and the regulatory subunits C and H. The proton translocation complex V0 consists of the proton transport subunit a, a ring of proteolipid subunits c9c'', rotary subunit d, subunits e and f, and the accessory subunits VhaAC45 and ATP6AP2.

Functionally, subunit of the V0 complex of vacuolar(H+)-ATPase (V-ATPase), a multisubunit enzyme composed of a peripheral complex (V1) that hydrolyzes ATP and a membrane integral complex (V0) that translocates protons. V-ATPase is responsible for acidifying and maintaining the pH of intracellular compartments and in some cell types, is targeted to the plasma membrane, where it is responsible for acidifying the extracellular environment. May play a role in coupling of proton transport and ATP hydrolysis. The protein is Probable V-type proton ATPase subunit d 2 (VhaAC39-2) of Drosophila melanogaster (Fruit fly).